We begin with the raw amino-acid sequence, 254 residues long: Small ribosomal subunit protein eS1 (254 aa).

Ala-2 carries the N-acetylalanine; partial modification.

This sequence belongs to the eukaryotic ribosomal protein eS1 family. As to quaternary structure, component of the small ribosomal subunit. Mature ribosomes consist of a small (40S) and a large (60S) subunit. The 40S subunit contains about 33 different proteins and 1 molecule of RNA (18S). The 60S subunit contains about 49 different proteins and 3 molecules of RNA (25S, 5.8S and 5S).

It localises to the cytoplasm. This is Small ribosomal subunit protein eS1 from Zygosaccharomyces rouxii (strain ATCC 2623 / CBS 732 / NBRC 1130 / NCYC 568 / NRRL Y-229).